The chain runs to 139 residues: Large ribosomal subunit protein uL13 (139 aa).

This sequence belongs to the universal ribosomal protein uL13 family. Part of the 50S ribosomal subunit.

In terms of biological role, this protein is one of the early assembly proteins of the 50S ribosomal subunit, although it is not seen to bind rRNA by itself. It is important during the early stages of 50S assembly. The polypeptide is Large ribosomal subunit protein uL13 (Aliarcobacter butzleri (strain RM4018) (Arcobacter butzleri)).